A 120-amino-acid polypeptide reads, in one-letter code: Large ribosomal subunit protein uL18 (120 aa).

It belongs to the universal ribosomal protein uL18 family. In terms of assembly, part of the 50S ribosomal subunit; part of the 5S rRNA/L5/L18/L25 subcomplex. Contacts the 5S and 23S rRNAs.

This is one of the proteins that bind and probably mediate the attachment of the 5S RNA into the large ribosomal subunit, where it forms part of the central protuberance. This Ehrlichia ruminantium (strain Gardel) protein is Large ribosomal subunit protein uL18.